The sequence spans 427 residues: Trigger factor (427 aa).

One can recognise a PPIase FKBP-type domain in the interval 163–248; the sequence is GDTVILDFEG…LHEIKTKEVP (86 aa).

The protein belongs to the FKBP-type PPIase family. Tig subfamily.

Its subcellular location is the cytoplasm. It catalyses the reaction [protein]-peptidylproline (omega=180) = [protein]-peptidylproline (omega=0). Its function is as follows. Involved in protein export. Acts as a chaperone by maintaining the newly synthesized protein in an open conformation. Functions as a peptidyl-prolyl cis-trans isomerase. In Listeria innocua serovar 6a (strain ATCC BAA-680 / CLIP 11262), this protein is Trigger factor.